A 1046-amino-acid chain; its full sequence is Piwi-like protein 2 (1046 aa).

The span at 1–12 (MDPKRPTFPSPP) shows a compositional bias: pro residues. Residues 1-35 (MDPKRPTFPSPPGVIRAPWQQSTEDQSQLLDQPSL) form a disordered region. Positions 19–31 (WQQSTEDQSQLLD) are enriched in polar residues. Residues 462–575 (SVLDVMNLIY…LLPELSFMTG (114 aa)) form the PAZ domain. The Piwi domain occupies 741–1032 (LVVCIMTGNR…LAFLSGQYLH (292 aa)). Catalysis depends on residues aspartate 818, glutamate 856, aspartate 888, and histidine 1021.

Belongs to the argonaute family. Piwi subfamily. Component of the PET complex. The cofactor is Mg(2+). In terms of processing, methylated on arginine residues; required for the interaction with Tudor domain-containing protein and subsequent localization to the meiotic nuage, also named P granule. In terms of tissue distribution, detected in primordial germ cells (PGCs) from 3 dpf. In adult, it is found in both the female and male gonad. In the ovary, it is present in all stages of germ cell differentiation. In testis, it is present in mitotic and meiotic germ cells. No protein has been detected in the fully differentiated sperm cell.

It is found in the cytoplasm. The protein resides in the nucleus. In terms of biological role, endoribonuclease that plays a central role during spermatogenesis by repressing transposable elements and preventing their mobilization, which is essential for the germline integrity. Plays an essential role in germ cell differentiation and meiosis, independently of the function in transposable elements repression. Acts via the piRNA metabolic process, which mediates the repression of transposable elements during meiosis by forming complexes composed of piRNAs and Piwi proteins and govern the methylation and subsequent repression of transposons. During piRNA biosynthesis, plays a key role in the piRNA amplification loop, also named ping-pong amplification cycle, by acting as a 'slicer-competent' piRNA endoribonuclease that cleaves primary piRNAs, which are then loaded onto 'slicer-incompetent' piwil4. Piwil2 slicing produces a pre-miRNA intermediate, which is then processed in mature piRNAs, and as well as a 16 nucleotide by-product that is degraded. Required for piwil4/miwi2 nuclear localization and association with secondary piRNAs antisense. Represses circadian rhythms by promoting the stability and activity of core clock components BMAL1 and CLOCK. This Danio rerio (Zebrafish) protein is Piwi-like protein 2 (piwil2).